The following is a 635-amino-acid chain: MGNGNSTETKESRRSKMRKKIQNFRSRRRLSRPGSGSVSGLASQRSVSADDFAGIALLTLIGAEMKFKDKWLACVSFGEQTFRSEISDSTEKPIWNSEKKLLLEKNGPSLARISVFETNRLLKNNIVGYCELDLLDFVVQEPDSTCKSFDLLDPASSNVVGSMFVSCSVEDPVETETCFAKRILSIVDYDEDGKLSFSEFSDLMNAFGNVVAANKKEELFKAADLNGDGVVTIDELAALLAVQQEQEPIINSCPVCGEALQLDKLNAMIHMTLCFDEGTGNQMTGGFLTDRQASYGWMFKLSEWTHLSTYDVGLNTGSSASHIVVIDRKTKRLVEELIDSKIVMSMRAIYQSKIGLRLMDQGAKEILQNLSEKQGKKMNSVESAQNIPSFLEFFKDQINMAEVKYPLDHFKTFNEFFVRELKPGARPIACMDQDDVAVSAADCRLMAFQSVDDSTRFWIKGRKFSIKGLLGNDVQSDAFLDGSLVIFRLAPQDYHRFHSPVSGVIEKFVNVSGSLYTVNPIAVNSKYCNVFTENKRTIVIISTAEFGKVAFVAIGATMVGSISFVRQEGDHVKKGDELGYFSFGGSTVICVFEKDSIKIDEDLLANSARSLETLVTVGMQLGVSFPKLENCVLEP.

The interval 1–42 is disordered; that stretch reads MGNGNSTETKESRRSKMRKKIQNFRSRRRLSRPGSGSVSGLA. Gly2 is lipidated: N-myristoyl glycine. Positions 15–31 are enriched in basic residues; the sequence is SKMRKKIQNFRSRRRLS. Residues 22–147 form the C2 domain; the sequence is QNFRSRRRLS…VVQEPDSTCK (126 aa). EF-hand domains lie at 180-210 and 211-246; these read AKRILSIVDYDEDGKLSFSEFSDLMNAFGNV and VAANKKEELFKAADLNGDGVVTIDELAALLAVQQEQ. 9 residues coordinate Ca(2+): Asp188, Asp190, Asp192, Lys194, Glu199, Asp224, Asn226, Asp228, and Glu235. Catalysis depends on charge relay system; for autoendoproteolytic cleavage activity residues Asp442, His498, and Ser586. Ser586 functions as the Schiff-base intermediate with substrate; via pyruvic acid; for decarboxylase activity in the catalytic mechanism. A Pyruvic acid (Ser); by autocatalysis modification is found at Ser586.

The protein belongs to the phosphatidylserine decarboxylase family. PSD-B subfamily. Eukaryotic type II sub-subfamily. Heterodimer of a large membrane-associated beta subunit and a small pyruvoyl-containing alpha subunit. Pyruvate is required as a cofactor. In terms of processing, is synthesized initially as an inactive proenzyme. Formation of the active enzyme involves a self-maturation process in which the active site pyruvoyl group is generated from an internal serine residue via an autocatalytic post-translational modification. Two non-identical subunits are generated from the proenzyme in this reaction, and the pyruvate is formed at the N-terminus of the alpha chain, which is derived from the carboxyl end of the proenzyme. The autoendoproteolytic cleavage occurs by a canonical serine protease mechanism, in which the side chain hydroxyl group of the serine supplies its oxygen atom to form the C-terminus of the beta chain, while the remainder of the serine residue undergoes an oxidative deamination to produce ammonia and the pyruvoyl prosthetic group on the alpha chain. During this reaction, the Ser that is part of the protease active site of the proenzyme becomes the pyruvoyl prosthetic group, which constitutes an essential element of the active site of the mature decarboxylase. In terms of tissue distribution, expressed in roots, leaves, stems and flowers.

The protein resides in the endoplasmic reticulum membrane. It carries out the reaction a 1,2-diacyl-sn-glycero-3-phospho-L-serine + H(+) = a 1,2-diacyl-sn-glycero-3-phosphoethanolamine + CO2. It functions in the pathway phospholipid metabolism; phosphatidylethanolamine biosynthesis; phosphatidylethanolamine from CDP-diacylglycerol: step 2/2. Functionally, catalyzes the formation of phosphatidylethanolamine (PtdEtn) from phosphatidylserine (PtdSer). Plays a central role in phospholipid metabolism and in the interorganelle trafficking of phosphatidylserine. Contributes only to a minor proportion of PtdEtn production. The sequence is that of Phosphatidylserine decarboxylase proenzyme 3 (PSD3) from Arabidopsis thaliana (Mouse-ear cress).